The sequence spans 387 residues: Monomeric sarcosine oxidase (387 aa).

D6–F36 lines the FAD pocket. C316 bears the S-8alpha-FAD cysteine mark.

This sequence belongs to the MSOX/MTOX family. MSOX subfamily. Monomer. FAD serves as cofactor.

The protein resides in the cytoplasm. It catalyses the reaction sarcosine + O2 + H2O = formaldehyde + glycine + H2O2. In terms of biological role, catalyzes the oxidative demethylation of sarcosine. In Bacillus sp. (strain NS-129), this protein is Monomeric sarcosine oxidase (soxA).